The sequence spans 254 residues: Chaperone protein PmfD (254 aa).

Residues 1–26 (MNSFSTLKTLFCGSLLALSLVNTTQA) form the signal peptide.

The protein belongs to the periplasmic pilus chaperone family.

The protein localises to the periplasm. Involved in the biogenesis of the PMF fimbria. The sequence is that of Chaperone protein PmfD (pmfD) from Proteus mirabilis (strain HI4320).